We begin with the raw amino-acid sequence, 136 residues long: ATP synthase F(0) complex subunit C1, mitochondrial (136 aa).

A mitochondrion-targeting transit peptide spans 1–61; the sequence is MQTTGALLIS…REFQTSVVSR (61 aa). Residues 77–97 form a helical membrane-spanning segment; that stretch reads VGVAGSGAGIGTVFGSLIIGY. Lysine 104 bears the N6,N6,N6-trimethyllysine mark. A helical transmembrane segment spans residues 112–132; sequence ILGFALFEAMGLFCLMVAFLI.

This sequence belongs to the ATPase C chain family. As to quaternary structure, homooctamer; the c-ring consists of eight c subunits forming a circle, and each subunit adopts a hairpin shape. Component of the ATP synthase complex composed at least of ATP5F1A/subunit alpha, ATP5F1B/subunit beta, ATP5MC1/subunit c (homooctomer), MT-ATP6/subunit a, MT-ATP8/subunit 8, ATP5ME/subunit e, ATP5MF/subunit f, ATP5MG/subunit g, ATP5MK/subunit k, ATP5MJ/subunit j, ATP5F1C/subunit gamma, ATP5F1D/subunit delta, ATP5F1E/subunit epsilon, ATP5PF/subunit F6, ATP5PB/subunit b, ATP5PD/subunit d, ATP5PO/subunit OSCP. ATP synthase complex consists of a soluble F(1) head domain (subunits alpha(3) and beta(3)) - the catalytic core - and a membrane F(0) domain - the membrane proton channel (subunits c, a, 8, e, f, g, k and j). These two domains are linked by a central stalk (subunits gamma, delta, and epsilon) rotating inside the F1 region and a stationary peripheral stalk (subunits F6, b, d, and OSCP). Interacts with TMEM70 (homooligomer form); this interaction facilitates the oligomer formation of subunit c/ATP5MC1 (c-ring) and the c-ring membrane insertion and also protects ATP5MC1 against intramitochondrial proteolysis. Trimethylated by ATPSCKMT at Lys-104. Methylation is required for proper incorporation of the C subunit into the ATP synthase complex and mitochondrial respiration.

The protein resides in the mitochondrion membrane. It carries out the reaction H(+)(in) = H(+)(out). Subunit c, of the mitochondrial membrane ATP synthase complex (F(1)F(0) ATP synthase or Complex V) that produces ATP from ADP in the presence of a proton gradient across the membrane which is generated by electron transport complexes of the respiratory chain. ATP synthase complex consist of a soluble F(1) head domain - the catalytic core - and a membrane F(1) domain - the membrane proton channel. These two domains are linked by a central stalk rotating inside the F(1) region and a stationary peripheral stalk. During catalysis, ATP synthesis in the catalytic domain of F(1) is coupled via a rotary mechanism of the central stalk subunits to proton translocation. With the subunit a (MT-ATP6), forms the proton-conducting channel in the F(0) domain, that contains two crucial half-channels (inlet and outlet) that facilitate proton movement from the mitochondrial intermembrane space (IMS) into the matrix. Protons are taken up via the inlet half-channel and released through the outlet half-channel, following a Grotthuss mechanism. This is ATP synthase F(0) complex subunit C1, mitochondrial from Sus scrofa (Pig).